We begin with the raw amino-acid sequence, 176 residues long: Membrane glycoprotein UL144 (176 aa).

The signal sequence occupies residues 1–20 (MKPLIMLICFAVILLQLGVT). TNFR-Cys repeat units follow at residues 22–56 (VCQHNEVQLGNECCPPCGSGQRVTKVCTDYTSVTC) and 58–95 (PCPNGTYVSGLYNCTDCTQCNVTQVMIRNCTSTNNTVC). 6 disulfides stabilise this stretch: Cys-23/Cys-34, Cys-35/Cys-48, Cys-38/Cys-56, Cys-59/Cys-71, Cys-74/Cys-87, and Cys-77/Cys-95. Residues 134 to 154 (LAWLSLFIFLVGIILLILYLI) form a helical membrane-spanning segment.

Interacts with host TRIM23; this interaction causes auto-ubiquitination of TRAF6, leading to NF-kappaB activation.

It localises to the membrane. Its function is as follows. Activates NF-kappaB in a tumor necrosis factor receptor (TNFR)-associated factor 6 (TRAF6)-dependent manner, causing the up-regulation of the chemokine CCL22. The protein is Membrane glycoprotein UL144 (UL144) of Homo sapiens (Human).